The following is a 507-amino-acid chain: ATP synthase subunit alpha, plastid (507 aa).

Position 170 to 177 (170 to 177) interacts with ATP; that stretch reads GDRQTGKT.

It belongs to the ATPase alpha/beta chains family. F-type ATPases have 2 components, CF(1) - the catalytic core - and CF(0) - the membrane proton channel. CF(1) has five subunits: alpha(3), beta(3), gamma(1), delta(1), epsilon(1). CF(0) has four main subunits: a, b, b' and c.

It is found in the plastid membrane. The enzyme catalyses ATP + H2O + 4 H(+)(in) = ADP + phosphate + 5 H(+)(out). In terms of biological role, produces ATP from ADP in the presence of a proton gradient across the membrane. The alpha chain is a regulatory subunit. This Aneura mirabilis (Parasitic liverwort) protein is ATP synthase subunit alpha, plastid.